We begin with the raw amino-acid sequence, 275 residues long: 2,3,4,5-tetrahydropyridine-2,6-dicarboxylate N-succinyltransferase (275 aa).

R106 and D143 together coordinate substrate.

The protein belongs to the transferase hexapeptide repeat family. In terms of assembly, homotrimer.

The protein localises to the cytoplasm. The enzyme catalyses (S)-2,3,4,5-tetrahydrodipicolinate + succinyl-CoA + H2O = (S)-2-succinylamino-6-oxoheptanedioate + CoA. It functions in the pathway amino-acid biosynthesis; L-lysine biosynthesis via DAP pathway; LL-2,6-diaminopimelate from (S)-tetrahydrodipicolinate (succinylase route): step 1/3. This chain is 2,3,4,5-tetrahydropyridine-2,6-dicarboxylate N-succinyltransferase, found in Rickettsia bellii (strain RML369-C).